The sequence spans 404 residues: Aspergillopepsin-1 (404 aa).

The first 20 residues, 1-20 (MVILSKVAAVAVGLSTVASA), serve as a signal peptide directing secretion. Residues 21–77 (LPTGPSHSPHARRGFTINQITRQTARVGPKTASFPAIYSRALAKYGGTVPAHLKSAV) constitute a propeptide, activation peptide. Residues 95 to 401 (YLTPVNIGGT…DSQGPRLGFA (307 aa)) form the Peptidase A1 domain. Residue D111 is part of the active site. N-linked (GlcNAc...) asparagine glycosylation occurs at N140. Residue D293 is part of the active site. C329 and C364 are joined by a disulfide.

The protein belongs to the peptidase A1 family. In terms of assembly, monomer.

The protein localises to the secreted. The catalysed reaction is Hydrolysis of proteins with broad specificity. Generally favors hydrophobic residues in P1 and P1', but also accepts Lys in P1, which leads to activation of trypsinogen. Does not clot milk.. Its function is as follows. Secreted aspartic endopeptidase that allows assimilation of proteinaceous substrates. The scissile peptide bond is attacked by a nucleophilic water molecule activated by two aspartic residues in the active site. Shows a broad primary substrate specificity. Favors hydrophobic residues at the P1 and P1' positions, but also accepts a lysine residue in the P1 position, leading to the activation of trypsinogen and chymotrypsinogen A. The chain is Aspergillopepsin-1 (pepA) from Aspergillus flavus (strain ATCC 200026 / FGSC A1120 / IAM 13836 / NRRL 3357 / JCM 12722 / SRRC 167).